The sequence spans 546 residues: Membrane protein insertase YidC (546 aa).

The helical transmembrane segment at 8 to 28 (ILLATVLSVGILILWQVIFPT) threads the bilayer. The disordered stretch occupies residues 31-70 (APPKPAHPPAAEVAKPAAPASPAPGAAAPAVPAPPPDAPE). Positions 39-60 (PAAEVAKPAAPASPAPGAAAPA) are enriched in low complexity. 5 helical membrane-spanning segments follow: residues 326 to 346 (IDYG…LYVM), 356 to 376 (WGVA…PLTY), 422 to 442 (LGGC…YAAL), 459 to 479 (LTAH…SFVM), and 498 to 518 (FFPG…TLYI).

Belongs to the OXA1/ALB3/YidC family. Type 1 subfamily. In terms of assembly, interacts with the Sec translocase complex via SecD. Specifically interacts with transmembrane segments of nascent integral membrane proteins during membrane integration.

Its subcellular location is the cell inner membrane. Functionally, required for the insertion and/or proper folding and/or complex formation of integral membrane proteins into the membrane. Involved in integration of membrane proteins that insert both dependently and independently of the Sec translocase complex, as well as at least some lipoproteins. Aids folding of multispanning membrane proteins. This Anaeromyxobacter dehalogenans (strain 2CP-1 / ATCC BAA-258) protein is Membrane protein insertase YidC.